The primary structure comprises 551 residues: Hydroxylamine reductase (551 aa).

Residues Cys3, Cys6, Cys18, and Cys25 each contribute to the [2Fe-2S] cluster site. Residues His249, Glu273, Cys317, Cys405, Cys433, Cys459, Glu493, and Lys495 each contribute to the hybrid [4Fe-2O-2S] cluster site. Cys405 carries the cysteine persulfide modification.

Belongs to the HCP family. [2Fe-2S] cluster is required as a cofactor. Requires hybrid [4Fe-2O-2S] cluster as cofactor.

The protein localises to the cytoplasm. It carries out the reaction A + NH4(+) + H2O = hydroxylamine + AH2 + H(+). Catalyzes the reduction of hydroxylamine to form NH(3) and H(2)O. The chain is Hydroxylamine reductase from Actinobacillus pleuropneumoniae serotype 7 (strain AP76).